We begin with the raw amino-acid sequence, 151 residues long: Flagellar assembly factor FliW (151 aa).

This sequence belongs to the FliW family. In terms of assembly, interacts with translational regulator CsrA and flagellin(s).

The protein resides in the cytoplasm. In terms of biological role, acts as an anti-CsrA protein, binds CsrA and prevents it from repressing translation of its target genes, one of which is flagellin. Binds to flagellin and participates in the assembly of the flagellum. The sequence is that of Flagellar assembly factor FliW from Lachnospira eligens (strain ATCC 27750 / DSM 3376 / VPI C15-48 / C15-B4) (Eubacterium eligens).